A 369-amino-acid polypeptide reads, in one-letter code: Probable dual-specificity RNA methyltransferase RlmN (369 aa).

Residue Glu108 is the Proton acceptor of the active site. Residues 114–357 form the Radical SAM core domain; that stretch reads YPDRATVCIS…CTVRDTRGQE (244 aa). Cys121 and Cys362 are disulfide-bonded. 3 residues coordinate [4Fe-4S] cluster: Cys128, Cys132, and Cys135. S-adenosyl-L-methionine contacts are provided by residues 183–184, Ser217, 240–242, and Asn319; these read GE and SLH. Residue Cys362 is the S-methylcysteine intermediate of the active site.

The protein belongs to the radical SAM superfamily. RlmN family. The cofactor is [4Fe-4S] cluster.

The protein resides in the cytoplasm. It catalyses the reaction adenosine(2503) in 23S rRNA + 2 reduced [2Fe-2S]-[ferredoxin] + 2 S-adenosyl-L-methionine = 2-methyladenosine(2503) in 23S rRNA + 5'-deoxyadenosine + L-methionine + 2 oxidized [2Fe-2S]-[ferredoxin] + S-adenosyl-L-homocysteine. The enzyme catalyses adenosine(37) in tRNA + 2 reduced [2Fe-2S]-[ferredoxin] + 2 S-adenosyl-L-methionine = 2-methyladenosine(37) in tRNA + 5'-deoxyadenosine + L-methionine + 2 oxidized [2Fe-2S]-[ferredoxin] + S-adenosyl-L-homocysteine. Its function is as follows. Specifically methylates position 2 of adenine 2503 in 23S rRNA and position 2 of adenine 37 in tRNAs. The protein is Probable dual-specificity RNA methyltransferase RlmN of Saccharopolyspora erythraea (strain ATCC 11635 / DSM 40517 / JCM 4748 / NBRC 13426 / NCIMB 8594 / NRRL 2338).